Reading from the N-terminus, the 757-residue chain is Cellulose synthase-like protein B1 (757 aa).

The next 2 membrane-spanning stretches (helical) occupy residues 18–38 (TNYFLRAVYLTVLGLFFSLLL) and 50–70 (VWLVAFFCESCFFLVCLLITC). Residue aspartate 136 is part of the active site. The stretch at 186–216 (EFNRDWEKTKREYEKLRRKVEDATGDSHMLD) forms a coiled coil. The active site involves aspartate 462. A run of 6 helical transmembrane segments spans residues 533–553 (LAYLCIITCLRSIPELIYCLL), 569–589 (LYLGITVTLVGIHCLYTLWEF), 615–635 (LFSIFDITLKLLGISETVFII), 674–694 (FLPGTFIVLVNIAALAVFSVG), 710–730 (AEACGCVLVMMLFLPFLMGLF), and 737–757 (TPLSTLSIAGFLAVLFVVFSV).

It belongs to the glycosyltransferase 2 family. Plant cellulose synthase-like B subfamily. Expressed in young seedlings, primarily in the vascular tissue.

It is found in the golgi apparatus membrane. Its function is as follows. Thought to be a Golgi-localized beta-glycan synthase that polymerize the backbones of noncellulosic polysaccharides (hemicelluloses) of plant cell wall. The sequence is that of Cellulose synthase-like protein B1 (CSLB1) from Arabidopsis thaliana (Mouse-ear cress).